Here is a 440-residue protein sequence, read N- to C-terminus: Chromosomal replication initiator protein DnaA (440 aa).

The domain I, interacts with DnaA modulators stretch occupies residues 1 to 69 (MKERILQEIK…VKVVLGNDAT (69 aa)). The tract at residues 69–96 (TFEITYEAFEPHSSYSEPLVKKRAVLLT) is domain II. A domain III, AAA+ region region spans residues 97 to 313 (PLNPDYTFEN…GAIIKLLVYK (217 aa)). 9 residues coordinate ADP: V108, N113, G140, L141, G142, K143, T144, H145, and R300. Residue G140 participates in ATP binding. ATP is bound by residues G142, K143, and T144. Position 144 (T144) interacts with Mg(2+). The tract at residues 314-440 (ETTGKEVDLK…GEISRRALSG (127 aa)) is domain IV, binds dsDNA.

Belongs to the DnaA family. In terms of assembly, oligomerizes as a right-handed, spiral filament on DNA at oriC.

The protein resides in the cytoplasm. Functionally, plays an essential role in the initiation and regulation of chromosomal replication. ATP-DnaA binds to the origin of replication (oriC) to initiate formation of the DNA replication initiation complex once per cell cycle. Binds the DnaA box (a 9 base pair repeat at the origin) and separates the double-stranded (ds)DNA. Forms a right-handed helical filament on oriC DNA; dsDNA binds to the exterior of the filament while single-stranded (ss)DNA is stabiized in the filament's interior. The ATP-DnaA-oriC complex binds and stabilizes one strand of the AT-rich DNA unwinding element (DUE), permitting loading of DNA polymerase. After initiation quickly degrades to an ADP-DnaA complex that is not apt for DNA replication. Binds acidic phospholipids. In terms of biological role, the DnaA box consensus is 5'-[ATC][AT]AC[CT]TACCA[CT][CTA]-3' in this bacterium. Mutagenesis of residues that line the central pore blocks dsDNA separation. In Thermotoga maritima (strain ATCC 43589 / DSM 3109 / JCM 10099 / NBRC 100826 / MSB8), this protein is Chromosomal replication initiator protein DnaA.